Here is a 96-residue protein sequence, read N- to C-terminus: UPF0102 protein ML1607 (96 aa).

The protein belongs to the UPF0102 family.

This Mycobacterium leprae (strain TN) protein is UPF0102 protein ML1607.